A 928-amino-acid chain; its full sequence is Arf guanine nucleotide exchange factor sec74 (928 aa).

Polar residues-rich tracts occupy residues 1 to 12 (MDESSRIASSSA) and 57 to 83 (TITS…STTD). Disordered regions lie at residues 1 to 152 (MDES…RPSS) and 227 to 249 (SLSS…EDFG). Phosphoserine is present on Ser-67. 2 stretches are compositionally biased toward low complexity: residues 89 to 102 (GHSS…KVSS) and 115 to 132 (SKSS…TSSS). Residues 228-420 (LSSNFSARTP…ECFYDNITYT (193 aa)) form the SEC7 domain. Over residues 234 to 245 (ARTPASNQSSVS) the composition is skewed to polar residues. One can recognise a PH domain in the interval 548–677 (KVFKLGILIQ…WLVKINFVST (130 aa)).

The protein resides in the cytoplasm. Its subcellular location is the cell tip. Its function is as follows. Guanine nucleotide exchange factor for Arf GTPases, stimulating the nucleotide exchange from the GDP-bound to the GTP-bound form. Involved in vesicular transport. The protein is Arf guanine nucleotide exchange factor sec74 (sec74) of Schizosaccharomyces pombe (strain 972 / ATCC 24843) (Fission yeast).